A 207-amino-acid chain; its full sequence is LexA repressor (207 aa).

The segment at residues 28 to 48 (VREIGEAVGLASSSTVHGHLS) is a DNA-binding region (H-T-H motif). Active-site for autocatalytic cleavage activity residues include Ser130 and Lys168.

This sequence belongs to the peptidase S24 family. As to quaternary structure, homodimer.

It catalyses the reaction Hydrolysis of Ala-|-Gly bond in repressor LexA.. In terms of biological role, represses a number of genes involved in the response to DNA damage (SOS response), including recA and lexA. In the presence of single-stranded DNA, RecA interacts with LexA causing an autocatalytic cleavage which disrupts the DNA-binding part of LexA, leading to derepression of the SOS regulon and eventually DNA repair. The polypeptide is LexA repressor (Staphylococcus carnosus (strain TM300)).